Consider the following 650-residue polypeptide: 1-deoxy-D-xylulose-5-phosphate synthase (650 aa).

Thiamine diphosphate-binding positions include H73 and 113–115; that span reads SHA. A Mg(2+)-binding site is contributed by D145. Residues 146–147, N175, Y287, and E369 contribute to the thiamine diphosphate site; that span reads GA. N175 contributes to the Mg(2+) binding site. Positions 629–650 are disordered; sequence SARPLPEDAERVPMRAEDDEQA. The segment covering 633–644 has biased composition (basic and acidic residues); that stretch reads LPEDAERVPMRA.

Belongs to the transketolase family. DXPS subfamily. Homodimer. The cofactor is Mg(2+). Requires thiamine diphosphate as cofactor.

The enzyme catalyses D-glyceraldehyde 3-phosphate + pyruvate + H(+) = 1-deoxy-D-xylulose 5-phosphate + CO2. It participates in metabolic intermediate biosynthesis; 1-deoxy-D-xylulose 5-phosphate biosynthesis; 1-deoxy-D-xylulose 5-phosphate from D-glyceraldehyde 3-phosphate and pyruvate: step 1/1. Functionally, catalyzes the acyloin condensation reaction between C atoms 2 and 3 of pyruvate and glyceraldehyde 3-phosphate to yield 1-deoxy-D-xylulose-5-phosphate (DXP). The polypeptide is 1-deoxy-D-xylulose-5-phosphate synthase (Clavibacter sepedonicus (Clavibacter michiganensis subsp. sepedonicus)).